We begin with the raw amino-acid sequence, 177 residues long: Novel acetylcholine receptor chaperone (177 aa).

Topologically, residues 1-5 are cytoplasmic; that stretch reads MASPR. The chain crosses the membrane as a helical span at residues 6–26; the sequence is TVTVVALSVALGLFFVFMGTI. The Lumenal portion of the chain corresponds to 27–61; the sequence is KLTPRLSKDAYSEMKRAYKSYVRALPLLKKMGINS. The tract at residues 43–54 is interaction with NGFR; sequence AYKSYVRALPLL. Residues 62 to 82 form a helical membrane-spanning segment; the sequence is ILLRKSIGALEVACGIVMTLV. Over 83–88 the chain is Cytoplasmic; sequence PGRPKD. Residues 89-109 form a helical membrane-spanning segment; sequence VANFFLLLLVLAVLFFHQLVG. Topologically, residues 110–114 are lumenal; it reads DPLKR. Residues 115 to 132 form a helical membrane-spanning segment; the sequence is YAHALVFGILLTCRLLIA. Residues 133-177 lie on the Cytoplasmic side of the membrane; sequence RKPEDRSSEKKSSPPGNAGSDGNAGNTEEQPSLYEKAPQGKMKLS. The tract at residues 136-177 is disordered; that stretch reads EDRSSEKKSSPPGNAGSDGNAGNTEEQPSLYEKAPQGKMKLS.

The protein belongs to the DoxX family. As to quaternary structure, may interact with NGFR. Interacts with RPN1, RPN2 and CANX.

Its subcellular location is the peroxisome membrane. It is found in the cytoplasmic vesicle. It localises to the endoplasmic reticulum membrane. In terms of biological role, molecular chaperone which mediates the proper assembly and functional expression of the nicotinic acetylcholine receptors (nAChRs) throughout the brain. Essential for the proper folding, assembly, function and surface trafficking of alpha-7 (CHRNA7), alpha-4-beta-2, alpha-3-beta-2 and alpha-3-beta-4 receptors. Stably associates with ribophorin-1 (RPN1) and ribophorin-2 (RPN2) (components of the oligosaccharyl transferase (OST) complex) and with calnexin (CANX), both of which are critical for NACHO-mediated effects on CHRNA7 assembly and function. Facilitates the proper folding and assembly of alpha-6-beta-2 and alpha-6-beta-2-beta-3 receptors and acts at early stages of the nAChRs subunit assembly. Promotes the expression of the alpha-4(2):beta-2(3) stoichiometric form over the alpha-4(3):beta-2(2) form. This is Novel acetylcholine receptor chaperone (TMEM35A) from Bos taurus (Bovine).